A 473-amino-acid polypeptide reads, in one-letter code: Trehalose-6-phosphate synthase (473 aa).

Arginine 10 is a D-glucose 6-phosphate binding site. 21–22 provides a ligand contact to UDP-alpha-D-glucose; sequence GG. Residues tyrosine 76 and aspartate 130 each coordinate D-glucose 6-phosphate. Arginine 262 and lysine 267 together coordinate UDP-alpha-D-glucose. Position 300 (arginine 300) interacts with D-glucose 6-phosphate. UDP-alpha-D-glucose contacts are provided by residues phenylalanine 339 and 365-369; that span reads LVAKE. Positions 454 to 473 are disordered; it reads TPRSPERQQQNNVATFPKLA.

Belongs to the glycosyltransferase 20 family. Homotetramer.

It catalyses the reaction D-glucose 6-phosphate + UDP-alpha-D-glucose = alpha,alpha-trehalose 6-phosphate + UDP + H(+). It functions in the pathway glycan biosynthesis; trehalose biosynthesis. Functionally, probably involved in the osmoprotection via the biosynthesis of trehalose. Catalyzes the transfer of glucose from UDP-alpha-D-glucose (UDP-Glc) to D-glucose 6-phosphate (Glc-6-P) to form trehalose-6-phosphate. Acts with retention of the anomeric configuration of the UDP-sugar donor. The protein is Trehalose-6-phosphate synthase of Salmonella paratyphi A (strain ATCC 9150 / SARB42).